The chain runs to 85 residues: Protein AC4 (85 aa).

Residue Gly-2 is the site of N-myristoyl glycine; by host attachment.

It belongs to the geminiviridae protein AC4/C4 family. In terms of assembly, interacts with Arabidopsis thaliana ASK7/ASK-eta and ASK6/ASK-zeta proteins. In terms of processing, phosphorylated by Arabidopsis thaliana ASK7/ASK-eta mainly on threonine and serine residues.

Its subcellular location is the host cell membrane. Pathogenicity determinant. May act as a suppressor of RNA-mediated gene silencing, also known as post-transcriptional gene silencing (PTGS), a mechanism of plant viral defense that limits the accumulation of viral RNAs. May repress the AL61 promoter. The chain is Protein AC4 from Solanum lycopersicum (Tomato).